Here is a 188-residue protein sequence, read N- to C-terminus: Threonylcarbamoyl-AMP synthase (188 aa).

The 186-residue stretch at 3 to 188 (QLHPSDIKDI…RSGKILRNGQ (186 aa)) folds into the YrdC-like domain.

It belongs to the SUA5 family. TsaC subfamily.

The protein localises to the cytoplasm. It carries out the reaction L-threonine + hydrogencarbonate + ATP = L-threonylcarbamoyladenylate + diphosphate + H2O. In terms of biological role, required for the formation of a threonylcarbamoyl group on adenosine at position 37 (t(6)A37) in tRNAs that read codons beginning with adenine. Catalyzes the conversion of L-threonine, HCO(3)(-)/CO(2) and ATP to give threonylcarbamoyl-AMP (TC-AMP) as the acyladenylate intermediate, with the release of diphosphate. The protein is Threonylcarbamoyl-AMP synthase of Shewanella baltica (strain OS155 / ATCC BAA-1091).